A 1318-amino-acid polypeptide reads, in one-letter code: 1-phosphatidylinositol 4,5-bisphosphate phosphodiesterase classes I and II (1318 aa).

Residues 318 to 466 (DDMDQPMSHY…LRRKIIIKNK (149 aa)) enclose the PI-PLC X-box domain. Residues histidine 333 and histidine 378 contribute to the active site. Residues lysine 464 and lysine 466 each contribute to the substrate site. The span at 466–481 (KKKHHHHHHHHHHKKP) shows a compositional bias: basic residues. 2 disordered regions span residues 466–489 (KKKHHHHHHHHHHKKPAQVGTPAA) and 505–594 (QQVG…KETE). 2 stretches are compositionally biased toward low complexity: residues 528 to 543 (ATGTGTGSAAGTAGHA) and 554 to 563 (KDSTGSSDSD). Residues 571–580 (LPNTTPNLPS) show a composition bias toward polar residues. Residues 585–594 (PPEKAQKETE) are compositionally biased toward basic and acidic residues. Residues 599-715 (ISALVNYVQP…GYLLKPEFMR (117 aa)) form the PI-PLC Y-box domain. 2 residues coordinate substrate: serine 628 and arginine 655. The 129-residue stretch at 715-843 (RRSDRRLDPF…NLRSEVGQPI (129 aa)) folds into the C2 domain. 2 disordered regions span residues 1080 to 1112 (LDLGDSSEESAAADAGEDLAGGSSSLDGRTQES) and 1296 to 1318 (GSHSAISPAKSHNSIAAAAEMKT). Residues 1088–1107 (ESAAADAGEDLAGGSSSLDG) show a composition bias toward low complexity.

As to expression, expressed in neuronal cell bodies of the optic lobe, central brain, and thoracic ganglia in adults, and the brain of larvae.

The catalysed reaction is a 1,2-diacyl-sn-glycero-3-phospho-(1D-myo-inositol-4,5-bisphosphate) + H2O = 1D-myo-inositol 1,4,5-trisphosphate + a 1,2-diacyl-sn-glycerol + H(+). In terms of biological role, the production of the second messenger molecules diacylglycerol (DAG) and inositol 1,4,5-trisphosphate (IP3) is mediated by activated phosphatidylinositol-specific phospholipase C enzymes. The protein is 1-phosphatidylinositol 4,5-bisphosphate phosphodiesterase classes I and II (Plc21C) of Drosophila melanogaster (Fruit fly).